The following is a 106-amino-acid chain: Small ribosomal subunit protein uS17 (106 aa).

The protein belongs to the universal ribosomal protein uS17 family. As to quaternary structure, part of the 30S ribosomal subunit.

One of the primary rRNA binding proteins, it binds specifically to the 5'-end of 16S ribosomal RNA. This is Small ribosomal subunit protein uS17 from Picrophilus torridus (strain ATCC 700027 / DSM 9790 / JCM 10055 / NBRC 100828 / KAW 2/3).